Reading from the N-terminus, the 87-residue chain is MSDAHGVARDQLRAFIERIERLEEEKKTIADDIKDVYGEAKGMGFDTKILKKVVALRKKDEQERMEEEAILDTYLHALGMIESPPEG.

It belongs to the UPF0335 family.

This chain is UPF0335 protein RHECIAT_CH0003797, found in Rhizobium etli (strain CIAT 652).